The following is a 154-amino-acid chain: Aspartate carbamoyltransferase regulatory chain (154 aa).

The Zn(2+) site is built by cysteine 109, cysteine 114, cysteine 138, and cysteine 141.

Belongs to the PyrI family. As to quaternary structure, contains catalytic and regulatory chains. It depends on Zn(2+) as a cofactor.

In terms of biological role, involved in allosteric regulation of aspartate carbamoyltransferase. The sequence is that of Aspartate carbamoyltransferase regulatory chain from Photorhabdus laumondii subsp. laumondii (strain DSM 15139 / CIP 105565 / TT01) (Photorhabdus luminescens subsp. laumondii).